The sequence spans 66 residues: uncharacterized protein (66 aa).

The first 19 residues, 1–19 (MRRLYRHLASFFLLPSCPG), serve as a signal peptide directing secretion.

This is an uncharacterized protein from Saccharomyces cerevisiae (strain ATCC 204508 / S288c) (Baker's yeast).